Here is a 105-residue protein sequence, read N- to C-terminus: Small ribosomal subunit protein uS10 (105 aa).

The protein belongs to the universal ribosomal protein uS10 family. As to quaternary structure, part of the 30S ribosomal subunit.

Functionally, involved in the binding of tRNA to the ribosomes. The chain is Small ribosomal subunit protein uS10 from Anaplasma marginale (strain Florida).